Reading from the N-terminus, the 164-residue chain is Transcriptional repressor NrdR (164 aa).

Residues 3-34 (CPKCNYNKSSVVDSRQAEDGNTIRRRRECESC) fold into a zinc finger. Residues 49-139 (LLVIKKDGTR…VYKSFKDLDE (91 aa)) form the ATP-cone domain.

Belongs to the NrdR family. Zn(2+) is required as a cofactor.

Its function is as follows. Negatively regulates transcription of bacterial ribonucleotide reductase nrd genes and operons by binding to NrdR-boxes. This is Transcriptional repressor NrdR from Streptococcus equi subsp. zooepidemicus (strain H70).